The sequence spans 20 residues: Chemoheterotroph-specific protein (20 aa).

The sequence is that of Chemoheterotroph-specific protein from Thiomonas delicata (Thiomonas cuprina).